The following is a 90-amino-acid chain: Small ribosomal subunit protein uS15c (90 aa).

It belongs to the universal ribosomal protein uS15 family. In terms of assembly, part of the 30S ribosomal subunit.

Its subcellular location is the plastid. The protein resides in the chloroplast. The sequence is that of Small ribosomal subunit protein uS15c (rps15) from Drimys granadensis.